A 152-amino-acid polypeptide reads, in one-letter code: Ribosome maturation factor RimP (152 aa).

The protein belongs to the RimP family.

The protein localises to the cytoplasm. Functionally, required for maturation of 30S ribosomal subunits. The polypeptide is Ribosome maturation factor RimP (Burkholderia cenocepacia (strain ATCC BAA-245 / DSM 16553 / LMG 16656 / NCTC 13227 / J2315 / CF5610) (Burkholderia cepacia (strain J2315))).